A 612-amino-acid chain; its full sequence is Dihydroxy-acid dehydratase (612 aa).

Residue Asp-81 coordinates Mg(2+). Cys-122 lines the [2Fe-2S] cluster pocket. Mg(2+) is bound by residues Asp-123 and Lys-124. N6-carboxylysine is present on Lys-124. Cys-195 is a binding site for [2Fe-2S] cluster. Glu-492 is a binding site for Mg(2+). Ser-518 acts as the Proton acceptor in catalysis.

Belongs to the IlvD/Edd family. As to quaternary structure, homodimer. It depends on [2Fe-2S] cluster as a cofactor. Mg(2+) serves as cofactor.

It carries out the reaction (2R)-2,3-dihydroxy-3-methylbutanoate = 3-methyl-2-oxobutanoate + H2O. The enzyme catalyses (2R,3R)-2,3-dihydroxy-3-methylpentanoate = (S)-3-methyl-2-oxopentanoate + H2O. It participates in amino-acid biosynthesis; L-isoleucine biosynthesis; L-isoleucine from 2-oxobutanoate: step 3/4. The protein operates within amino-acid biosynthesis; L-valine biosynthesis; L-valine from pyruvate: step 3/4. Functionally, functions in the biosynthesis of branched-chain amino acids. Catalyzes the dehydration of (2R,3R)-2,3-dihydroxy-3-methylpentanoate (2,3-dihydroxy-3-methylvalerate) into 2-oxo-3-methylpentanoate (2-oxo-3-methylvalerate) and of (2R)-2,3-dihydroxy-3-methylbutanoate (2,3-dihydroxyisovalerate) into 2-oxo-3-methylbutanoate (2-oxoisovalerate), the penultimate precursor to L-isoleucine and L-valine, respectively. In Kocuria rhizophila (strain ATCC 9341 / DSM 348 / NBRC 103217 / DC2201), this protein is Dihydroxy-acid dehydratase.